The sequence spans 517 residues: Alpha,alpha-trehalose-phosphate synthase [UDP-forming] 1 (517 aa).

The D-glucose 6-phosphate site is built by Tyr98 and Asp152. UDP is bound by residues Arg288 and Lys293. Arg288 and Lys293 together coordinate UDP-alpha-D-glucose. Arg326 is a D-glucose 6-phosphate binding site. 387-395 (DGMNLVAYE) lines the UDP-alpha-D-glucose pocket. Position 391–395 (391–395 (LVAYE)) interacts with UDP. Residues 486-517 (FHAKKASFSDNNSENGEPSNGVETPAQEQVAQ) are disordered. The span at 493 to 517 (FSDNNSENGEPSNGVETPAQEQVAQ) shows a compositional bias: polar residues.

It belongs to the glycosyltransferase 20 family.

The enzyme catalyses D-glucose 6-phosphate + UDP-alpha-D-glucose = alpha,alpha-trehalose 6-phosphate + UDP + H(+). The protein operates within carbohydrate biosynthesis. Functionally, synthase catalytic subunit of the trehalose synthase complex that catalyzes the production of trehalose from glucose-6-phosphate and UDP-alpha-D-glucose in a two step process. This Aspergillus niger protein is Alpha,alpha-trehalose-phosphate synthase [UDP-forming] 1.